Reading from the N-terminus, the 829-residue chain is E3 ubiquitin-protein ligase Jade-2 (829 aa).

The tract at residues 1–52 (MEEKRRKYSISSDNSDTTDGHVTSTSASRCSKLPSSTKSGWPRQNEKKPSEV) is disordered. Phosphoserine occurs at positions 9 and 15. The span at 9 to 39 (SISSDNSDTTDGHVTSTSASRCSKLPSSTKS) shows a compositional bias: polar residues. Residues Lys-32 and Lys-38 each carry the N6-acetyllysine modification. Ser-117 is modified (phosphoserine). The PHD-type 1 zinc finger occupies 199–249 (DVVCDVCRSPEGEDGNEMVFCDKCNVCVHQACYGILKVPTGSWLCRTCALG). The segment at 251–285 (QPKCLLCPKRGGALKPTRSGTKWVHVSCALWIPEV) adopts a C2HC pre-PHD-type zinc-finger fold. N6-acetyllysine is present on Lys-298. A PHD-type 2 zinc finger spans residues 309 to 365 (LSCSLCKECTGTCIQCSMPSCITAFHVTCAFDRGLEMRTILADNDEVKFKSLCQEHS). 3 disordered regions span residues 362-383 (QEHSDGGPRSEPTSEPVEPSQA), 517-555 (REPSGRRSKGKKNDSKRKGREGPKGSSPEKKEKVKAGPE), and 622-817 (SFMR…REAG). A compositionally biased stretch (basic residues) spans 522 to 535 (RRSKGKKNDSKRKG). The segment covering 536–552 (REGPKGSSPEKKEKVKA) has biased composition (basic and acidic residues). Residues 637–650 (KARGRTRLPAKKKP) are compositionally biased toward basic residues. Residues 776 to 786 (ERPKVSLHFDT) show a composition bias toward basic and acidic residues. Residues 792–806 (FSDEEMSDSEVEAED) are compositionally biased toward acidic residues.

Belongs to the JADE family. In terms of assembly, component of the HBO1 complex composed at least of ING4 or ING5, MYST2/HBO1, MEAF6, and one of JADE1, JADE2 and JADE3. Interacts (via C-terminus) with KDM1A (via AOD/Tower domain).

It catalyses the reaction S-ubiquitinyl-[E2 ubiquitin-conjugating enzyme]-L-cysteine + [acceptor protein]-L-lysine = [E2 ubiquitin-conjugating enzyme]-L-cysteine + N(6)-ubiquitinyl-[acceptor protein]-L-lysine.. Its pathway is protein modification; protein ubiquitination. In terms of biological role, scaffold subunit of some HBO1 complexes, which have a histone H4 acetyltransferase activity. Acts as a E3 ubiquitin-protein ligase mediating the ubiquitination and subsequent proteasomal degradation of target protein histone demethylase KDM1A. Also acts as a ubiquitin ligase E3 toward itself. Positive regulator of neurogenesis. The polypeptide is E3 ubiquitin-protein ligase Jade-2 (Jade2) (Mus musculus (Mouse)).